The chain runs to 305 residues: Protoheme IX farnesyltransferase (305 aa).

A run of 9 helical transmembrane segments spans residues 38 to 58, 60 to 80, 110 to 130, 131 to 151, 161 to 181, 185 to 205, 227 to 247, 249 to 269, and 285 to 305; these read FITT…SFLG, LDIV…SCAI, AYAF…MTTV, TSAV…TMWS, IGSV…TGTI, AWVL…SLAI, VTKR…FFLG, LGWP…VIGL, and FVYS…ITLF.

It belongs to the UbiA prenyltransferase family. Protoheme IX farnesyltransferase subfamily. Interacts with CtaA.

Its subcellular location is the cell membrane. It catalyses the reaction heme b + (2E,6E)-farnesyl diphosphate + H2O = Fe(II)-heme o + diphosphate. The protein operates within porphyrin-containing compound metabolism; heme O biosynthesis; heme O from protoheme: step 1/1. In terms of biological role, converts heme B (protoheme IX) to heme O by substitution of the vinyl group on carbon 2 of heme B porphyrin ring with a hydroxyethyl farnesyl side group. The chain is Protoheme IX farnesyltransferase from Bacillus pumilus (strain SAFR-032).